A 173-amino-acid polypeptide reads, in one-letter code: Crossover junction endodeoxyribonuclease RuvC (173 aa).

Catalysis depends on residues Asp-8, Glu-67, and Asp-139. Residues Asp-8, Glu-67, and Asp-139 each contribute to the Mg(2+) site.

Belongs to the RuvC family. Homodimer which binds Holliday junction (HJ) DNA. The HJ becomes 2-fold symmetrical on binding to RuvC with unstacked arms; it has a different conformation from HJ DNA in complex with RuvA. In the full resolvosome a probable DNA-RuvA(4)-RuvB(12)-RuvC(2) complex forms which resolves the HJ. Mg(2+) serves as cofactor.

It is found in the cytoplasm. The enzyme catalyses Endonucleolytic cleavage at a junction such as a reciprocal single-stranded crossover between two homologous DNA duplexes (Holliday junction).. Its function is as follows. The RuvA-RuvB-RuvC complex processes Holliday junction (HJ) DNA during genetic recombination and DNA repair. Endonuclease that resolves HJ intermediates. Cleaves cruciform DNA by making single-stranded nicks across the HJ at symmetrical positions within the homologous arms, yielding a 5'-phosphate and a 3'-hydroxyl group; requires a central core of homology in the junction. The consensus cleavage sequence is 5'-(A/T)TT(C/G)-3'. Cleavage occurs on the 3'-side of the TT dinucleotide at the point of strand exchange. HJ branch migration catalyzed by RuvA-RuvB allows RuvC to scan DNA until it finds its consensus sequence, where it cleaves and resolves the cruciform DNA. The sequence is that of Crossover junction endodeoxyribonuclease RuvC from Erwinia tasmaniensis (strain DSM 17950 / CFBP 7177 / CIP 109463 / NCPPB 4357 / Et1/99).